The sequence spans 284 residues: Phosphonates import ATP-binding protein PhnC 2 (284 aa).

The ABC transporter domain occupies 5 to 253; the sequence is IEVRGLSKSF…MLRDLYGTEA (249 aa). 38–45 contacts ATP; it reads GASGSGKS.

This sequence belongs to the ABC transporter superfamily. Phosphonates importer (TC 3.A.1.9.1) family. As to quaternary structure, the complex is composed of two ATP-binding proteins (PhnC), two transmembrane proteins (PhnE) and a solute-binding protein (PhnD).

It localises to the cell inner membrane. The enzyme catalyses phosphonate(out) + ATP + H2O = phosphonate(in) + ADP + phosphate + H(+). Functionally, part of the ABC transporter complex PhnCDE involved in phosphonates import. Responsible for energy coupling to the transport system. This chain is Phosphonates import ATP-binding protein PhnC 2, found in Cupriavidus necator (strain ATCC 17699 / DSM 428 / KCTC 22496 / NCIMB 10442 / H16 / Stanier 337) (Ralstonia eutropha).